A 1374-amino-acid chain; its full sequence is Sterol 3-beta-glucosyltransferase (1374 aa).

Positions 1 to 14 (MRPLRDDAKRRADR) are enriched in basic and acidic residues. 3 disordered regions span residues 1 to 60 (MRPL…RDGN), 83 to 190 (ARFD…PRAA), and 206 to 227 (TSAT…QPQS). Residues 16–28 (LSASMKPTSSNRP) show a composition bias toward polar residues. Basic and acidic residues predominate over residues 29 to 41 (FSDRVPDRFKDGD). Positions 101 to 112 (VEQTTGKASSRT) are enriched in polar residues. The span at 125-138 (KRSEPSKLVLEERG) shows a compositional bias: basic and acidic residues. A GRAM 1 domain is found at 234 to 283 (MRLMKMFEFAKPEKVLVEYACSLLQSMLLQGYMYVTEGHICFYAYLPKKS). A PH domain is found at 285-382 (VAIKSGYLSK…WVKALQQVIF (98 aa)). The segment at 458-538 (ATKEAQDQHD…SMTDTTESAS (81 aa)) is disordered. Basic and acidic residues-rich tracts occupy residues 461-473 (EAQD…HQPE) and 490-499 (SDQRREDSPR). Positions 503 to 538 (SSVGNENQGSADSFAEQGTGSSPIIQSMTDTTESAS) are enriched in polar residues. The GRAM 2 domain occupies 704–770 (DRFRAHFALP…KDIENVEKEK (67 aa)). 10 residues coordinate UDP-alpha-D-glucose: Ser893, Arg894, Asp896, Ala1196, His1198, His1211, Gly1215, Thr1216, Asp1235, and Gln1236. Residues 1314–1325 (ASSTPFSPTPTA) show a composition bias toward polar residues. Residues 1314 to 1338 (ASSTPFSPTPTAKASPDGGDDDLDD) form a disordered region.

This sequence belongs to the glycosyltransferase 28 family.

It localises to the cytoplasm. The protein localises to the preautophagosomal structure membrane. The enzyme catalyses a sterol + UDP-alpha-D-glucose = a sterol 3-beta-D-glucoside + UDP + H(+). The catalysed reaction is ergosterol + UDP-alpha-D-glucose = ergosteryl 3-beta-D-glucoside + UDP + H(+). Functionally, sterol glycosyltransferase responsible for the glycosylation of ergosterol to form ergosterol-glucoside. The sequence is that of Sterol 3-beta-glucosyltransferase from Penicillium rubens (strain ATCC 28089 / DSM 1075 / NRRL 1951 / Wisconsin 54-1255) (Penicillium chrysogenum).